Here is a 337-residue protein sequence, read N- to C-terminus: D-alanine--D-alanine ligase (337 aa).

Residues 124-330 (KMWFSALGIP…FTEYLSLVIN (207 aa)) enclose the ATP-grasp domain. 154 to 209 (ALAQWGSIFVKAASQGSSVGCYKVDDSDKVAGVLKDAFGYAPYVIVEKTIKARELE) serves as a coordination point for ATP. Residues D284, E297, and N299 each contribute to the Mg(2+) site.

This sequence belongs to the D-alanine--D-alanine ligase family. Requires Mg(2+) as cofactor. Mn(2+) serves as cofactor.

It is found in the cytoplasm. The catalysed reaction is 2 D-alanine + ATP = D-alanyl-D-alanine + ADP + phosphate + H(+). Its pathway is cell wall biogenesis; peptidoglycan biosynthesis. Cell wall formation. The chain is D-alanine--D-alanine ligase from Shewanella baltica (strain OS195).